The following is a 358-amino-acid chain: Uptake hydrogenase small subunit (358 aa).

The N-terminal stretch at Met-1–Ala-45 is a signal peptide. [4Fe-4S] cluster contacts are provided by Cys-62, Cys-65, Cys-160, Cys-194, His-232, Cys-235, Cys-260, and Cys-266. [3Fe-4S] cluster is bound by residues Cys-275, Cys-294, and Cys-297.

The protein belongs to the [NiFe]/[NiFeSe] hydrogenase small subunit family. As to quaternary structure, heterodimer of a large and a small subunit. [4Fe-4S] cluster is required as a cofactor. [3Fe-4S] cluster serves as cofactor.

It localises to the cell membrane. The catalysed reaction is H2 + A = AH2. Its function is as follows. This enzyme recycles the H(2) produced by nitrogenase to increase the production of ATP and to protect nitrogenase against inhibition or damage by O(2) under carbon- or phosphate-limited conditions. The chain is Uptake hydrogenase small subunit (hupA) from Rhodobacter capsulatus (Rhodopseudomonas capsulata).